The primary structure comprises 343 residues: Inositol 2-dehydrogenase (343 aa).

It belongs to the Gfo/Idh/MocA family. In terms of assembly, homotetramer.

It carries out the reaction myo-inositol + NAD(+) = scyllo-inosose + NADH + H(+). Its function is as follows. Involved in the oxidation of myo-inositol (MI) to 2-keto-myo-inositol (2KMI or 2-inosose). The polypeptide is Inositol 2-dehydrogenase (Streptomyces avermitilis (strain ATCC 31267 / DSM 46492 / JCM 5070 / NBRC 14893 / NCIMB 12804 / NRRL 8165 / MA-4680)).